Reading from the N-terminus, the 185-residue chain is UPF0397 protein LBA0922 (185 aa).

The next 5 helical transmembrane spans lie at 11–31 (VVAI…TSIP), 45–65 (FLAF…GFIG), 72–92 (IMYG…GWII), 111–131 (IILF…VVAP), and 146–166 (FVQG…IGTI).

Belongs to the UPF0397 family.

It localises to the cell membrane. The chain is UPF0397 protein LBA0922 from Lactobacillus acidophilus (strain ATCC 700396 / NCK56 / N2 / NCFM).